The primary structure comprises 434 residues: Gamma-glutamyl phosphate reductase (434 aa).

It belongs to the gamma-glutamyl phosphate reductase family.

It is found in the cytoplasm. It catalyses the reaction L-glutamate 5-semialdehyde + phosphate + NADP(+) = L-glutamyl 5-phosphate + NADPH + H(+). The protein operates within amino-acid biosynthesis; L-proline biosynthesis; L-glutamate 5-semialdehyde from L-glutamate: step 2/2. In terms of biological role, catalyzes the NADPH-dependent reduction of L-glutamate 5-phosphate into L-glutamate 5-semialdehyde and phosphate. The product spontaneously undergoes cyclization to form 1-pyrroline-5-carboxylate. In Trichormus variabilis (strain ATCC 29413 / PCC 7937) (Anabaena variabilis), this protein is Gamma-glutamyl phosphate reductase.